Reading from the N-terminus, the 188-residue chain is uncharacterized protein (188 aa).

The first 18 residues, 1–18, serve as a signal peptide directing secretion; the sequence is MTLRIIAHLLALTASLAG. Residue Cys19 is the site of N-palmitoyl cysteine attachment. Cys19 is lipidated: S-diacylglycerol cysteine.

Its subcellular location is the cell membrane. This is an uncharacterized protein from Sinorhizobium fredii (strain NBRC 101917 / NGR234).